A 325-amino-acid polypeptide reads, in one-letter code: Glycine--tRNA ligase alpha subunit (325 aa).

The protein belongs to the class-II aminoacyl-tRNA synthetase family. In terms of assembly, tetramer of two alpha and two beta subunits.

The protein resides in the cytoplasm. It carries out the reaction tRNA(Gly) + glycine + ATP = glycyl-tRNA(Gly) + AMP + diphosphate. The protein is Glycine--tRNA ligase alpha subunit of Ralstonia nicotianae (strain ATCC BAA-1114 / GMI1000) (Ralstonia solanacearum).